The following is a 449-amino-acid chain: UDP-N-acetylmuramate--L-alanine ligase (449 aa).

An ATP-binding site is contributed by 121–127; that stretch reads GAHGKSS.

The protein belongs to the MurCDEF family.

It localises to the cytoplasm. It catalyses the reaction UDP-N-acetyl-alpha-D-muramate + L-alanine + ATP = UDP-N-acetyl-alpha-D-muramoyl-L-alanine + ADP + phosphate + H(+). The protein operates within cell wall biogenesis; peptidoglycan biosynthesis. Cell wall formation. This chain is UDP-N-acetylmuramate--L-alanine ligase, found in Helicobacter pylori (strain P12).